We begin with the raw amino-acid sequence, 253 residues long: Methionine-R-sulfoxide reductase B3, mitochondrial (253 aa).

The first 56 residues, 1-56 (MPPAAPSVARSREGGGIGQRRLVFPKSARRTLPCPIALCLGLCLAAAAATTTRASA), serve as a signal peptide directing secretion. The residue at position 102 (Lys-102) is an N6-acetyllysine. Residues 107–229 (QQELRKRLTP…NSASLSFTPA (123 aa)) form the MsrB domain. The Zn(2+) site is built by Cys-146, Cys-149, Cys-195, and Cys-198. Cys-218 functions as the Nucleophile in the catalytic mechanism. The tract at residues 227 to 253 (TPADSSEAEGSGIKESGSPAAADRAEL) is disordered. Residue Ser-244 is modified to Phosphoserine. Positions 250 to 253 (RAEL) match the Endoplasmic reticulum retention signal motif.

It belongs to the MsrB Met sulfoxide reductase family. As to quaternary structure, monomer. The cofactor is Zn(2+). In terms of tissue distribution, widely expressed. Detected in the sensory epithelia of the organ of Corti and vestibular end organs as early as P2 up to adulthood (at protein level). In the organ of Corti, present in inner and outer hair cells and, to a lesser extent, in supporting cells (at protein level). In hair cells, distributed throughout the cell body. Barely detectable level in stereocilia. Also observed in spiral ganglion neurons, but not in the stria vascularis. In the vestibular end organs, found throughout the sensory epithelium, but more intense expression in hair cells than in supporting cells (at protein level). In vestibular hair cells, present within cell bodies and to a lesser extent in kinocilia. Barely detectable in stereocilia.

Its subcellular location is the endoplasmic reticulum. The catalysed reaction is L-methionyl-[protein] + [thioredoxin]-disulfide + H2O = L-methionyl-(R)-S-oxide-[protein] + [thioredoxin]-dithiol. It catalyses the reaction [thioredoxin]-disulfide + L-methionine + H2O = L-methionine (R)-S-oxide + [thioredoxin]-dithiol. In terms of biological role, catalyzes the reduction of free and protein-bound methionine sulfoxide to methionine. This is Methionine-R-sulfoxide reductase B3, mitochondrial (Msrb3) from Mus musculus (Mouse).